Consider the following 603-residue polypeptide: Proline--tRNA ligase (603 aa).

Belongs to the class-II aminoacyl-tRNA synthetase family. ProS type 1 subfamily. As to quaternary structure, homodimer.

Its subcellular location is the cytoplasm. It catalyses the reaction tRNA(Pro) + L-proline + ATP = L-prolyl-tRNA(Pro) + AMP + diphosphate. Its function is as follows. Catalyzes the attachment of proline to tRNA(Pro) in a two-step reaction: proline is first activated by ATP to form Pro-AMP and then transferred to the acceptor end of tRNA(Pro). As ProRS can inadvertently accommodate and process non-cognate amino acids such as alanine and cysteine, to avoid such errors it has two additional distinct editing activities against alanine. One activity is designated as 'pretransfer' editing and involves the tRNA(Pro)-independent hydrolysis of activated Ala-AMP. The other activity is designated 'posttransfer' editing and involves deacylation of mischarged Ala-tRNA(Pro). The misacylated Cys-tRNA(Pro) is not edited by ProRS. This chain is Proline--tRNA ligase, found in Synechocystis sp. (strain ATCC 27184 / PCC 6803 / Kazusa).